A 309-amino-acid polypeptide reads, in one-letter code: Ketosamine-3-kinase (309 aa).

Position 20 is a phosphoserine (Ser20). 89–91 lines the ATP pocket; sequence EHL. The Proton acceptor role is filled by Asp217.

This sequence belongs to the fructosamine kinase family.

It catalyses the reaction N(6)-D-ribulosyl-L-lysyl-[protein] + ATP = N(6)-(3-O-phospho-D-ribulosyl)-L-lysyl-[protein] + ADP + H(+). The catalysed reaction is N(6)-(D-psicosyl)-L-lysyl-[protein] + ATP = N(6)-(3-O-phospho-D-psicosyl)-L-lysyl-[protein] + ADP + H(+). Functionally, ketosamine-3-kinase involved in protein deglycation by mediating phosphorylation of ribuloselysine and psicoselysine on glycated proteins, to generate ribuloselysine-3 phosphate and psicoselysine-3 phosphate, respectively. Ribuloselysine-3 phosphate and psicoselysine-3 phosphate adducts are unstable and decompose under physiological conditions. Not able to phosphorylate fructoselysine. In Mus musculus (Mouse), this protein is Ketosamine-3-kinase.